The sequence spans 552 residues: ATP synthase subunit alpha (552 aa).

173–180 is an ATP binding site; the sequence is GDRQTGKT. The disordered stretch occupies residues 516 to 552; it reads DGKPLVNEPAPSPLDPGLVRQESIPVHRPAARKDDEG.

It belongs to the ATPase alpha/beta chains family. F-type ATPases have 2 components, CF(1) - the catalytic core - and CF(0) - the membrane proton channel. CF(1) has five subunits: alpha(3), beta(3), gamma(1), delta(1), epsilon(1). CF(0) has three main subunits: a(1), b(2) and c(9-12). The alpha and beta chains form an alternating ring which encloses part of the gamma chain. CF(1) is attached to CF(0) by a central stalk formed by the gamma and epsilon chains, while a peripheral stalk is formed by the delta and b chains.

Its subcellular location is the cell membrane. The catalysed reaction is ATP + H2O + 4 H(+)(in) = ADP + phosphate + 5 H(+)(out). In terms of biological role, produces ATP from ADP in the presence of a proton gradient across the membrane. The alpha chain is a regulatory subunit. This is ATP synthase subunit alpha from Frankia casuarinae (strain DSM 45818 / CECT 9043 / HFP020203 / CcI3).